The primary structure comprises 463 residues: Rop guanine nucleotide exchange factor 4 (463 aa).

Disordered regions lie at residues 1 to 25 (MESSSNSDQNEGTPTSSVSSPYRRT) and 55 to 87 (GHEEDVSEDAEEPKDDVVNDVHGDGDEEDSDID). The span at 59–68 (DVSEDAEEPK) shows a compositional bias: acidic residues. The span at 69–78 (DDVVNDVHGD) shows a compositional bias: basic and acidic residues. The PRONE domain maps to 84–463 (SDIDSAEDAE…VDRTVRNRDD (380 aa)).

Interacts with ARAC10/ROP11. As to expression, expressed in root vascular tissue and trichoblast cell files. Expressed in root metaxylem cell files. Expressed in guard cells of cotyledons, rosette leaves, sepals, petal, stigmas and siliques. Expressed in root metaxylem cell files.

The protein localises to the cytoplasm. It localises to the cell membrane. Functionally, guanine-nucleotide exchange factor (GEF) that acts as an activator of Rop (Rho of plants) GTPases by promoting the exchange of GDP for GTP. In association with ROPGEF1, acts as a specific regulator of ARAC10/ROP11 function in ABA-mediated stomatal closure. The sequence is that of Rop guanine nucleotide exchange factor 4 (ROPGEF4) from Arabidopsis thaliana (Mouse-ear cress).